The primary structure comprises 308 residues: HPr kinase/phosphorylase (308 aa).

Active-site residues include histidine 138 and lysine 159. 153–160 (GESGLGKS) lines the ATP pocket. Serine 160 serves as a coordination point for Mg(2+). Catalysis depends on aspartate 177, which acts as the Proton acceptor; for phosphorylation activity. Proton donor; for dephosphorylation activity. Positions 201-210 (LEVRGLGLLD) are important for the catalytic mechanism of both phosphorylation and dephosphorylation. Residue glutamate 202 participates in Mg(2+) binding. Arginine 243 is an active-site residue. Residues 264 to 269 (QVAAGR) form an important for the catalytic mechanism of dephosphorylation region.

It belongs to the HPrK/P family. Homohexamer. Requires Mg(2+) as cofactor.

It carries out the reaction [HPr protein]-L-serine + ATP = [HPr protein]-O-phospho-L-serine + ADP + H(+). The catalysed reaction is [HPr protein]-O-phospho-L-serine + phosphate + H(+) = [HPr protein]-L-serine + diphosphate. Its function is as follows. Catalyzes the ATP- as well as the pyrophosphate-dependent phosphorylation of a specific serine residue in HPr, a phosphocarrier protein of the phosphoenolpyruvate-dependent sugar phosphotransferase system (PTS). HprK/P also catalyzes the pyrophosphate-producing, inorganic phosphate-dependent dephosphorylation (phosphorolysis) of seryl-phosphorylated HPr (P-Ser-HPr). The protein is HPr kinase/phosphorylase of Bordetella bronchiseptica (strain ATCC BAA-588 / NCTC 13252 / RB50) (Alcaligenes bronchisepticus).